A 127-amino-acid chain; its full sequence is MLAVLKGIPLIQDIRAEGNSRSWIMTIDGHPARGEIFSEAFSISLFLNDLESLPKPCLAYVTLLLAAHPDVHDYAIQLTADGGWLNGYYTTSSSSELIAIEIEKHLALTCILKNVIRNHHKLYSGGV.

In terms of biological role, putative virulence protein. The protein is SpiC homolog (spiC) of Salmonella typhi.